The primary structure comprises 303 residues: MKITASMVSELRTKTGAGMMDCKKALSEADGNIEEAVDILRKKGLSAAAKKADRAAAEGLVVGLNEGSCGVLVEVNAETDFVAKNANFQEFTNGVAKVVVSSKPADLEALKALPFPGTDRTVAEEQTHQIATIGENINLRRFVCFDVAQGAVAVYIHGVGKIGVLVELETSKGDDERVAALGRNLAMHIAAANPQYLNRDEVSAEVVEKEKEIMRTKALESGKPEKIVEKIIAGQINKYFGEVCLLEQAYVIDPDLTVTKVVENLGKEIGAEVTLSRYVRFQLGEGLEKRSDDFAAEVASMTK.

Residues 79–82 (TDFV) form an involved in Mg(2+) ion dislocation from EF-Tu region.

It belongs to the EF-Ts family.

It is found in the cytoplasm. Functionally, associates with the EF-Tu.GDP complex and induces the exchange of GDP to GTP. It remains bound to the aminoacyl-tRNA.EF-Tu.GTP complex up to the GTP hydrolysis stage on the ribosome. The chain is Elongation factor Ts from Syntrophotalea carbinolica (strain DSM 2380 / NBRC 103641 / GraBd1) (Pelobacter carbinolicus).